A 101-amino-acid chain; its full sequence is MIPGEIIAAAGEIELNAGLETVSIEVANSGDRPVQVGSHYHFAETNPGLIFDRDAARGKRLDIPAGTAVRFEPGQTRQVTLIPLSGKREVFGFRQQVMGKL.

The protein belongs to the urease beta subunit family. In terms of assembly, heterotrimer of UreA (gamma), UreB (beta) and UreC (alpha) subunits. Three heterotrimers associate to form the active enzyme.

The protein resides in the cytoplasm. The enzyme catalyses urea + 2 H2O + H(+) = hydrogencarbonate + 2 NH4(+). The protein operates within nitrogen metabolism; urea degradation; CO(2) and NH(3) from urea (urease route): step 1/1. The protein is Urease subunit beta of Rhizobium meliloti (strain 1021) (Ensifer meliloti).